Consider the following 245-residue polypeptide: Ribonuclease PH (245 aa).

Phosphate-binding positions include arginine 87 and 125–127 (GTR).

Belongs to the RNase PH family. As to quaternary structure, homohexameric ring arranged as a trimer of dimers.

The catalysed reaction is tRNA(n+1) + phosphate = tRNA(n) + a ribonucleoside 5'-diphosphate. Its function is as follows. Phosphorolytic 3'-5' exoribonuclease that plays an important role in tRNA 3'-end maturation. Removes nucleotide residues following the 3'-CCA terminus of tRNAs; can also add nucleotides to the ends of RNA molecules by using nucleoside diphosphates as substrates, but this may not be physiologically important. Probably plays a role in initiation of 16S rRNA degradation (leading to ribosome degradation) during starvation. This is Ribonuclease PH from Streptomyces coelicolor (strain ATCC BAA-471 / A3(2) / M145).